Reading from the N-terminus, the 463-residue chain is uncharacterized protein (463 aa).

6 consecutive transmembrane segments (helical) span residues 3-23 (IPPE…SLLV), 88-108 (VAAA…AELA), 112-132 (AIHG…PIAL), 216-236 (FSPA…DFLW), 245-265 (LLLL…SALI), and 276-296 (LPIA…AVAV). The interval 303 to 322 (VPGGSPPTSNPAPAAPSSNS) is disordered. Positions 306 to 316 (GSPPTSNPAPA) are enriched in pro residues. A run of 2 helical transmembrane segments spans residues 323–343 (VGSA…APPG) and 419–439 (AGTL…AGMV).

This sequence belongs to the mycobacterial PPE family.

It is found in the cell membrane. This is an uncharacterized protein from Mycobacterium tuberculosis (strain CDC 1551 / Oshkosh).